The primary structure comprises 559 residues: 2-succinyl-5-enolpyruvyl-6-hydroxy-3-cyclohexene-1-carboxylate synthase (559 aa).

Belongs to the TPP enzyme family. MenD subfamily. As to quaternary structure, homodimer. It depends on Mg(2+) as a cofactor. Requires Mn(2+) as cofactor. The cofactor is thiamine diphosphate.

The catalysed reaction is isochorismate + 2-oxoglutarate + H(+) = 5-enolpyruvoyl-6-hydroxy-2-succinyl-cyclohex-3-ene-1-carboxylate + CO2. Its pathway is quinol/quinone metabolism; 1,4-dihydroxy-2-naphthoate biosynthesis; 1,4-dihydroxy-2-naphthoate from chorismate: step 2/7. It participates in quinol/quinone metabolism; menaquinone biosynthesis. Catalyzes the thiamine diphosphate-dependent decarboxylation of 2-oxoglutarate and the subsequent addition of the resulting succinic semialdehyde-thiamine pyrophosphate anion to isochorismate to yield 2-succinyl-5-enolpyruvyl-6-hydroxy-3-cyclohexene-1-carboxylate (SEPHCHC). This chain is 2-succinyl-5-enolpyruvyl-6-hydroxy-3-cyclohexene-1-carboxylate synthase, found in Edwardsiella ictaluri (strain 93-146).